Here is a 373-residue protein sequence, read N- to C-terminus: 4-hydroxy-3-methylbut-2-en-1-yl diphosphate synthase (flavodoxin) (373 aa).

[4Fe-4S] cluster is bound by residues C270, C273, C305, and E312.

This sequence belongs to the IspG family. [4Fe-4S] cluster is required as a cofactor.

It carries out the reaction (2E)-4-hydroxy-3-methylbut-2-enyl diphosphate + oxidized [flavodoxin] + H2O + 2 H(+) = 2-C-methyl-D-erythritol 2,4-cyclic diphosphate + reduced [flavodoxin]. The protein operates within isoprenoid biosynthesis; isopentenyl diphosphate biosynthesis via DXP pathway; isopentenyl diphosphate from 1-deoxy-D-xylulose 5-phosphate: step 5/6. Its function is as follows. Converts 2C-methyl-D-erythritol 2,4-cyclodiphosphate (ME-2,4cPP) into 1-hydroxy-2-methyl-2-(E)-butenyl 4-diphosphate. The chain is 4-hydroxy-3-methylbut-2-en-1-yl diphosphate synthase (flavodoxin) from Serratia proteamaculans (strain 568).